The following is a 315-amino-acid chain: WD repeat domain-containing protein 83 (315 aa).

7 WD repeats span residues 23–62 (CGQGAVRAVRFNVDGNYCLTCGSDKTLKLWNPLRGTLLRT), 65–104 (GHGYEVLDAAGSFDNSHLCSGGGDKTVVLWDVATGQVVRK), 107–146 (GHAGKVNTVQFNEEATVILSGSIDSSVRCWDCRSRKPEPV), 151–188 (EARDGISSVKVSDHEILAGSVDGRVRRYDLRMGQVTSD), 190–228 (VGSPITCTCFSRDGQCTLISSLDSTLRLLDKDTGELLGE), 231–272 (GHKN…LALA), and 275–313 (VGSNVVQSLAYHPADPCLLTAMGGSIQYWREETYEAEGG).

Belongs to the WD repeat MORG1 family. In terms of assembly, interacts with EGLN3/PHD3. Interacts with ERK signaling proteins MAP2K1/MEK1, MAP2K2/MEK2, LAMTOR3, ARAF/Raf-1, MAPK1/ERK2 and MAPK3/ERK1. Identified in the spliceosome C complex. Interacts with PARD6B and CRB3. Interacts strongly with GTP-bound RRAGA but not with inactive GDP-bound. Interacts with p62/SQSTM1. Highly expressed in testis and brain. Expressed at intermediate level in heart, liver and kidney. Weakly expressed in spleen and lung and absent in muscle.

Its subcellular location is the cytoplasm. The protein resides in the lysosome. It is found in the nucleus. Its function is as follows. Molecular scaffold protein for various multimeric protein complexes. Acts as a module in the assembly of a multicomponent scaffold for the ERK pathway, linking ERK responses to specific agonists. At low concentrations it enhances ERK activation, whereas high concentrations lead to the inhibition of ERK activation. Also involved in response to hypoxia by acting as a negative regulator of HIF1A/HIF-1-alpha via its interaction with EGLN3/PHD3. May promote degradation of HIF1A. May act by recruiting signaling complexes to a specific upstream activator. May also be involved in pre-mRNA splicing. Participates in tight junction development by regulating apico-basal polarity, a key step in tissue development and organization. Mechanistically, regulates the translocation of PAR6-aPKC from the cytoplasm to the apical surface by acting as an adapter between PARD6B AND CRB3. Also acts as a negative regulator of mTORC1 under nutrient-rich conditions by binding to the active Rag GTPases to inhibit mTORC1 localization to the lysosome and phosphorylation of downstream targets. This facilitates constitutive basal autophagy during nutrient availability. This Rattus norvegicus (Rat) protein is WD repeat domain-containing protein 83 (Wdr83).